The chain runs to 202 residues: MPDEPTGSADPLTSTEEAGGAGEPNAPAPPRRLRMLLSVAVVVLTLDIVTKVVAVQLLPPGQPVSIIGDTVTWTLVRNSGAAFSMATGYTWVLTLIATGVVVGIFWMGRRLVSPWWALGLGMILGGAMGNLVDRFFRAPGPLRGHVVDFLSVGWWPVFNVADPSVVGGAILLVILSIFGFDFDTVGRRHADGDTVGRRKADG.

Positions 1 to 29 (MPDEPTGSADPLTSTEEAGGAGEPNAPAP) are disordered. The next 3 membrane-spanning stretches (helical) occupy residues 35 to 55 (MLLS…VVAV), 88 to 108 (GYTW…FWMG), and 112 to 132 (VSPW…GNLV). Residues D148 and D162 contribute to the active site. A helical transmembrane segment spans residues 160-180 (VADPSVVGGAILLVILSIFGF).

This sequence belongs to the peptidase A8 family.

It is found in the cell membrane. The catalysed reaction is Release of signal peptides from bacterial membrane prolipoproteins. Hydrolyzes -Xaa-Yaa-Zaa-|-(S,diacylglyceryl)Cys-, in which Xaa is hydrophobic (preferably Leu), and Yaa (Ala or Ser) and Zaa (Gly or Ala) have small, neutral side chains.. Its pathway is protein modification; lipoprotein biosynthesis (signal peptide cleavage). Its function is as follows. This protein specifically catalyzes the removal of signal peptides from prolipoproteins. In Mycobacterium bovis (strain ATCC BAA-935 / AF2122/97), this protein is Lipoprotein signal peptidase.